Reading from the N-terminus, the 397-residue chain is Elongation factor Tu (397 aa).

The tr-type G domain occupies 10–207 (KPHVNIGTIG…AVDESIPEPV (198 aa)). Residues 19–26 (GHVDHGKT) form a G1 region. 19–26 (GHVDHGKT) is a binding site for GTP. Residue T26 participates in Mg(2+) binding. Residues 63 to 67 (GITIN) are G2. The segment at 84–87 (DAPG) is G3. GTP-binding positions include 84–88 (DAPGH) and 139–142 (NKSD). The interval 139–142 (NKSD) is G4. Residues 177 to 179 (SGL) form a G5 region.

This sequence belongs to the TRAFAC class translation factor GTPase superfamily. Classic translation factor GTPase family. EF-Tu/EF-1A subfamily. In terms of assembly, monomer.

The protein resides in the cytoplasm. The catalysed reaction is GTP + H2O = GDP + phosphate + H(+). Functionally, GTP hydrolase that promotes the GTP-dependent binding of aminoacyl-tRNA to the A-site of ribosomes during protein biosynthesis. The polypeptide is Elongation factor Tu (Clavibacter sepedonicus (Clavibacter michiganensis subsp. sepedonicus)).